A 274-amino-acid polypeptide reads, in one-letter code: NH(3)-dependent NAD(+) synthetase (274 aa).

46 to 53 serves as a coordination point for ATP; it reads GISGGQDS. Asp52 is a binding site for Mg(2+). Deamido-NAD(+) is bound at residue Arg140. Thr160 lines the ATP pocket. Mg(2+) is bound at residue Glu165. 2 residues coordinate deamido-NAD(+): Lys173 and Asp180. The ATP site is built by Lys189 and Thr211. 260–261 is a binding site for deamido-NAD(+); it reads HK.

This sequence belongs to the NAD synthetase family. Homodimer.

It catalyses the reaction deamido-NAD(+) + NH4(+) + ATP = AMP + diphosphate + NAD(+) + H(+). The protein operates within cofactor biosynthesis; NAD(+) biosynthesis; NAD(+) from deamido-NAD(+) (ammonia route): step 1/1. Catalyzes the ATP-dependent amidation of deamido-NAD to form NAD. Uses ammonia as a nitrogen source. This chain is NH(3)-dependent NAD(+) synthetase, found in Listeria welshimeri serovar 6b (strain ATCC 35897 / DSM 20650 / CCUG 15529 / CIP 8149 / NCTC 11857 / SLCC 5334 / V8).